The chain runs to 326 residues: Probable cell division protein WhiA (326 aa).

The segment at residues 275–308 (SLDELGRLADPPMTKDAIAGRIRRLLAMADKRAL) is a DNA-binding region (H-T-H motif).

It belongs to the WhiA family.

Its function is as follows. Involved in cell division and chromosome segregation. This is Probable cell division protein WhiA from Arthrobacter sp. (strain FB24).